The following is a 323-amino-acid chain: Serine/threonine-protein phosphatase PP1 (323 aa).

Residues Asp63, His65, Asp91, and Asn123 each contribute to the Mn(2+) site. His124 (proton donor) is an active-site residue. Positions 172 and 247 each coordinate Mn(2+).

This sequence belongs to the PPP phosphatase family. PP-1 subfamily. It depends on Mn(2+) as a cofactor.

It catalyses the reaction O-phospho-L-seryl-[protein] + H2O = L-seryl-[protein] + phosphate. The enzyme catalyses O-phospho-L-threonyl-[protein] + H2O = L-threonyl-[protein] + phosphate. Functionally, plays an important role in the control of mitosis by reversing the action of the nimA kinase. The sequence is that of Serine/threonine-protein phosphatase PP1 (bimG) from Emericella nidulans (strain FGSC A4 / ATCC 38163 / CBS 112.46 / NRRL 194 / M139) (Aspergillus nidulans).